We begin with the raw amino-acid sequence, 363 residues long: Mitogen-activated protein kinase 13 (363 aa).

Positions I33–L319 constitute a Protein kinase domain. ATP-binding positions include I39 to V47 and K62. The Proton acceptor role is filled by D159. T191 bears the Phosphothreonine mark. The short motif at T191–Y193 is the TXY element. Phosphotyrosine is present on Y193. T196 is modified (phosphothreonine).

It belongs to the protein kinase superfamily. CMGC Ser/Thr protein kinase family. MAP kinase subfamily. As to quaternary structure, interacts with MKK6. Post-translationally, dually phosphorylated on Thr-191 and Tyr-193, which activates the enzyme. As to expression, expressed in roots, stems and flower buds.

It catalyses the reaction L-seryl-[protein] + ATP = O-phospho-L-seryl-[protein] + ADP + H(+). The enzyme catalyses L-threonyl-[protein] + ATP = O-phospho-L-threonyl-[protein] + ADP + H(+). With respect to regulation, activated by threonine and tyrosine phosphorylation. Activated by the MAP kinase kinase MKK6 in vitro. Its function is as follows. MKK6-MPK13 module positively regulates lateral root formation. The protein is Mitogen-activated protein kinase 13 (MPK13) of Arabidopsis thaliana (Mouse-ear cress).